Reading from the N-terminus, the 504-residue chain is Cytochrome P450 4A24 (504 aa).

The next 2 membrane-spanning stretches (helical) occupy residues 6 to 26 (LASA…LLLL) and 112 to 132 (VVYR…NGQT). Cys451 contributes to the heme binding site.

It belongs to the cytochrome P450 family. Requires heme as cofactor.

It localises to the endoplasmic reticulum membrane. It carries out the reaction an omega-methyl-long-chain fatty acid + reduced [NADPH--hemoprotein reductase] + O2 = an omega-hydroxy-long-chain fatty acid + oxidized [NADPH--hemoprotein reductase] + H2O + H(+). In terms of biological role, catalyzes the omega- and (omega-1)-hydroxylation of various fatty acids such as laurate and palmitate. Has no activity toward taurochenodeoxycholic acid. This is Cytochrome P450 4A24 (CYP4A24) from Sus scrofa (Pig).